The sequence spans 194 residues: Lachesicidin (194 aa).

The signal sequence occupies residues 1-22 (MQGFFWKTWLVLAVCGTPASLA). A propeptide spanning residues 23 to 160 (HRPLSYGEAL…DEEKDQPKRV (138 aa)) is cleaved from the precursor. 2 disulfides stabilise this stretch: Cys-79–Cys-90 and Cys-101–Cys-118. Residues 125–154 (EEEEEEEEEEQKAEAENDEEVEKEKEDEEK) are compositionally biased toward acidic residues. The segment at 125–157 (EEEEEEEEEEQKAEAENDEEVEKEKEDEEKDQP) is disordered.

Belongs to the cathelicidin family. In terms of tissue distribution, expressed by the venom gland.

It localises to the secreted. The protein resides in the target cell membrane. In terms of biological role, potent antimicrobial peptide against Gram-negative and Gram-positive bacteria. Adopts an amphipathic alpha helical conformation, that may allow to partition into the target membrane. Low hemolytic activities have been observed on mammalian cells. The sequence is that of Lachesicidin from Lachesis muta rhombeata (Bushmaster).